A 313-amino-acid chain; its full sequence is tRNA-cytidine(32) 2-sulfurtransferase (313 aa).

Positions 50–55 (SGGKDS) match the PP-loop motif motif. [4Fe-4S] cluster contacts are provided by C125, C128, and C216.

The protein belongs to the TtcA family. In terms of assembly, homodimer. The cofactor is Mg(2+). [4Fe-4S] cluster is required as a cofactor.

The protein resides in the cytoplasm. The enzyme catalyses cytidine(32) in tRNA + S-sulfanyl-L-cysteinyl-[cysteine desulfurase] + AH2 + ATP = 2-thiocytidine(32) in tRNA + L-cysteinyl-[cysteine desulfurase] + A + AMP + diphosphate + H(+). Its pathway is tRNA modification. Catalyzes the ATP-dependent 2-thiolation of cytidine in position 32 of tRNA, to form 2-thiocytidine (s(2)C32). The sulfur atoms are provided by the cysteine/cysteine desulfurase (IscS) system. The sequence is that of tRNA-cytidine(32) 2-sulfurtransferase from Haemophilus influenzae (strain ATCC 51907 / DSM 11121 / KW20 / Rd).